Consider the following 125-residue polypeptide: Large ribosomal subunit protein bL12 (125 aa).

It belongs to the bacterial ribosomal protein bL12 family. As to quaternary structure, homodimer. Part of the ribosomal stalk of the 50S ribosomal subunit. Forms a multimeric L10(L12)X complex, where L10 forms an elongated spine to which 2 to 4 L12 dimers bind in a sequential fashion. Binds GTP-bound translation factors.

Its function is as follows. Forms part of the ribosomal stalk which helps the ribosome interact with GTP-bound translation factors. Is thus essential for accurate translation. The sequence is that of Large ribosomal subunit protein bL12 from Azoarcus sp. (strain BH72).